Here is a 457-residue protein sequence, read N- to C-terminus: Autophagy-related protein 14 (457 aa).

The stretch at 31–109 (RIENVMALIE…TRRAALSRRK (79 aa)) forms a coiled coil. 3 disordered regions span residues 54 to 73 (ETNA…QRTA), 252 to 274 (PSQA…VSRP), and 433 to 457 (NKNL…VKNR). Residues 253–266 (SQASVSSPSSTTDT) show a composition bias toward low complexity.

The protein belongs to the ATG14 family. Component of the autophagy-specific VPS34 PI3-kinase complex I.

Its subcellular location is the preautophagosomal structure membrane. It is found in the vacuole membrane. In terms of biological role, required for cytoplasm to vacuole transport (Cvt) and autophagy as a part of the autophagy-specific VPS34 PI3-kinase complex I. This complex is essential to recruit the ATG8-phosphatidylinositol conjugate and the ATG12-ATG5 conjugate to the pre-autophagosomal structure. ATG14 mediates the specific binding of the VPS34 PI3-kinase complex I to the preautophagosomal structure (PAS). Autophagy is required for proper vegetative growth, asexual/sexual reproduction, and full virulence. Autophagy is particularly involved in the biosynthesis of deoxynivalenol (DON), an important virulence determinant. This is Autophagy-related protein 14 from Gibberella zeae (strain ATCC MYA-4620 / CBS 123657 / FGSC 9075 / NRRL 31084 / PH-1) (Wheat head blight fungus).